Here is a 260-residue protein sequence, read N- to C-terminus: MKFTTAAVLSALVSAEIAFAAPGGNGFARRQARRQARAAGLKASPFRQVNAKEATVESNWGGAILIGSDFDTVSATANVPSASGGSSAAGTAWVGIDGDTCQTAILQTGFDWYGDGTYDAWYEWYPEVSDDFSGITISEGDSIQMSVTATSDTSGSATLENLTTGQKVSKSFSNESSGSLCRTNAEFIIEDFEECNSNGSDCEFVPFASFSPAVEFTDCSVTSDGESVSLDDAQITQVIINNQDVTDCSVSGTTVSCSYV.

The N-terminal stretch at 1-20 is a signal peptide; the sequence is MKFTTAAVLSALVSAEIAFA. A propeptide spanning residues 21 to 54 is cleaved from the precursor; it reads APGGNGFARRQARRQARAAGLKASPFRQVNAKEA. Cys-101 and Cys-181 are oxidised to a cystine. Catalysis depends on Glu-190, which acts as the Proton acceptor. 2 cysteine pairs are disulfide-bonded: Cys-195/Cys-219 and Cys-248/Cys-257.

The protein belongs to the peptidase G1 family. Monomer.

It catalyses the reaction Hydrolysis of proteins with broad specificity, cleaving 24-Phe-|-Phe-25, but not 15-Leu-|-Tyr-16 and 25-Phe-|-Tyr-26 in the B chain of insulin.. This Scytalidium lignicola (Hyphomycete) protein is Scytalidopepsin B.